We begin with the raw amino-acid sequence, 322 residues long: Transmembrane and ubiquitin-like domain-containing protein 2 (322 aa).

Residues 38–58 (VVAGVVVLILALVLAWLSTYV) form a helical membrane-spanning segment. A disordered region spans residues 88-168 (VAGQGTPEPT…VRSEDSTCLP (81 aa)). Gly residues predominate over residues 115–130 (EGGGDPTGEPGAGGGV). The region spanning 174–247 (ISVRLKFFND…IHCHRSPPGS (74 aa)) is the Ubiquitin-like domain. The next 2 helical transmembrane spans lie at 267-287 (LGVSVGSLMVPVFVVLLGVVW) and 296-316 (FFTAPATVSLVGVTVFFSFLV).

The protein localises to the membrane. The polypeptide is Transmembrane and ubiquitin-like domain-containing protein 2 (TMUB2) (Bos taurus (Bovine)).